The following is a 458-amino-acid chain: Exodeoxyribonuclease 7 large subunit (458 aa).

This sequence belongs to the XseA family. As to quaternary structure, heterooligomer composed of large and small subunits.

It localises to the cytoplasm. The enzyme catalyses Exonucleolytic cleavage in either 5'- to 3'- or 3'- to 5'-direction to yield nucleoside 5'-phosphates.. Bidirectionally degrades single-stranded DNA into large acid-insoluble oligonucleotides, which are then degraded further into small acid-soluble oligonucleotides. In Escherichia coli (strain UTI89 / UPEC), this protein is Exodeoxyribonuclease 7 large subunit.